Here is a 196-residue protein sequence, read N- to C-terminus: Kunitz trypsin inhibitor 5 (196 aa).

The signal sequence occupies residues 1-19 (MSSLLYIFLLLAVFISHRG). Cysteine 156 and cysteine 167 are joined by a disulfide.

Belongs to the protease inhibitor I3 (leguminous Kunitz-type inhibitor) family.

The protein localises to the endoplasmic reticulum. Can inhibit both serine proteases and cysteine proteases. May be involved in the modulation of the proteases that participate in the hydrolysis of dietary proteins in the gut of spider mites. This chain is Kunitz trypsin inhibitor 5, found in Arabidopsis thaliana (Mouse-ear cress).